Consider the following 575-residue polypeptide: Golgi-associated kinase 1A (575 aa).

An N-terminal signal peptide occupies residues 1-29; sequence MASWLRRKLRGKRRPVIAFCLLMILSAMA. Positions 30 to 119 are cleaved as a propeptide — removed in mature form; it reads VTRFPPQRPS…GDLRHPGRVR (90 aa). An O-glycosylated at one site region spans residues 53–58; the sequence is TGAPAT. Positions 143–153 are enriched in basic and acidic residues; it reads VGDPGTKDLGH. The tract at residues 143–162 is disordered; it reads VGDPGTKDLGHPQHGSPIQE. A propeptide spans 437–575 (removed in mature form); the sequence is RYCCGFEPEP…NLTLFRDEDP (139 aa). An N-linked (GlcNAc...) asparagine glycan is attached at asparagine 566.

It belongs to the GASK family. O-glycosylated with core 1 or possibly core 8 glycans. Post-translationally, proteolytically cleaved. Cleaved at Arg-120 and Arg-437 leading to a processed mature product of 35 kDa. The cleavage takes place in the Golgi apparatus. In terms of tissue distribution, expressed in skin, lung and colon (at protein level).

It is found in the secreted. Its subcellular location is the endoplasmic reticulum. It localises to the golgi apparatus. The protein localises to the membrane. The protein resides in the caveola. This is Golgi-associated kinase 1A from Homo sapiens (Human).